Consider the following 231-residue polypeptide: Orotidine 5'-phosphate decarboxylase (231 aa).

Residues aspartate 11, lysine 33, 60 to 69 (DLKFHDIPNT), threonine 117, arginine 178, glutamine 187, glycine 207, and arginine 208 contribute to the substrate site. The active-site Proton donor is lysine 62.

Belongs to the OMP decarboxylase family. Type 1 subfamily. In terms of assembly, homodimer.

It carries out the reaction orotidine 5'-phosphate + H(+) = UMP + CO2. Its pathway is pyrimidine metabolism; UMP biosynthesis via de novo pathway; UMP from orotate: step 2/2. In terms of biological role, catalyzes the decarboxylation of orotidine 5'-monophosphate (OMP) to uridine 5'-monophosphate (UMP). The protein is Orotidine 5'-phosphate decarboxylase of Nitrosomonas europaea (strain ATCC 19718 / CIP 103999 / KCTC 2705 / NBRC 14298).